A 629-amino-acid chain; its full sequence is Smc-like protein Sph1 (629 aa).

Coiled-coil stretches lie at residues 139–282 and 318–487; these read LETE…LLDD and AETT…NQFD.

Belongs to the Sph1/Sph2 family.

It is found in the cytoplasm. May play a role in a late step of replication. This Halobacterium salinarum (Halobacterium halobium) protein is Smc-like protein Sph1 (sph1).